A 305-amino-acid polypeptide reads, in one-letter code: Porphobilinogen deaminase (305 aa).

Residue Cys-240 is modified to S-(dipyrrolylmethanemethyl)cysteine.

Belongs to the HMBS family. Monomer. Dipyrromethane is required as a cofactor.

The catalysed reaction is 4 porphobilinogen + H2O = hydroxymethylbilane + 4 NH4(+). It functions in the pathway porphyrin-containing compound metabolism; protoporphyrin-IX biosynthesis; coproporphyrinogen-III from 5-aminolevulinate: step 2/4. Its function is as follows. Tetrapolymerization of the monopyrrole PBG into the hydroxymethylbilane pre-uroporphyrinogen in several discrete steps. The sequence is that of Porphobilinogen deaminase (hemC) from Xylella fastidiosa (strain 9a5c).